A 346-amino-acid chain; its full sequence is Dimethylallyltranstransferase (346 aa).

The isopentenyl diphosphate site is built by lysine 96, arginine 99, and histidine 128. The Mg(2+) site is built by aspartate 135 and aspartate 141. An isopentenyl diphosphate-binding site is contributed by arginine 147.

This sequence belongs to the FPP/GGPP synthase family. It depends on Mg(2+) as a cofactor.

It carries out the reaction isopentenyl diphosphate + dimethylallyl diphosphate = (2E)-geranyl diphosphate + diphosphate. Its pathway is isoprenoid biosynthesis; geranyl diphosphate biosynthesis; geranyl diphosphate from dimethylallyl diphosphate and isopentenyl diphosphate: step 1/1. Its function is as follows. Prenyltransferase involved in the biosynthesis of ambiguines, a family of hapalindole-type alkaloids. Catalyzes the addition of isopentenyl diphosphate (IPP) onto dimethylallyl diphosphate (DMAPP) to form geranyl pyrophosphate (GPP). Cannot use farnesyl diphosphate (FPP) or geranylgeranyl diphosphate (GGPP). This chain is Dimethylallyltranstransferase, found in Fischerella ambigua (strain UTEX 1903).